Consider the following 194-residue polypeptide: MWKFVKSALKKETWVKCEDCIQICFWGRSNVGKSSLLNALVNQKISYVSKQPGRTQFINYFQEENRFIVDLPGYGYAQLSKEKIEEMNYWISAFLKDDKCTKVMFLLIDSRTGITKIDLEKLAFLKAINLPIHLIYTKIDKLNQKEKSALVKKHNEYLDSNLLNESTNSFLVSSTNKIGLDDLVLFIEENIFKK.

Residues 19–193 (DCIQICFWGR…VLFIEENIFK (175 aa)) form the EngB-type G domain. Residues 27 to 34 (GRSNVGKS), 53 to 57 (GRTQF), 70 to 73 (DLPG), 137 to 140 (TKID), and 172 to 174 (VSS) contribute to the GTP site. The Mg(2+) site is built by Ser-34 and Thr-55.

Belongs to the TRAFAC class TrmE-Era-EngA-EngB-Septin-like GTPase superfamily. EngB GTPase family. Requires Mg(2+) as cofactor.

Necessary for normal cell division and for the maintenance of normal septation. The polypeptide is Probable GTP-binding protein EngB (Mycoplasmopsis agalactiae (strain NCTC 10123 / CIP 59.7 / PG2) (Mycoplasma agalactiae)).